The chain runs to 154 residues: GTP-dependent dephospho-CoA kinase (154 aa).

Residues aspartate 34, aspartate 53, and glutamate 107 each contribute to the GTP site.

This sequence belongs to the GTP-dependent DPCK family.

It catalyses the reaction 3'-dephospho-CoA + GTP = GDP + CoA + H(+). It functions in the pathway cofactor biosynthesis; coenzyme A biosynthesis. Catalyzes the GTP-dependent phosphorylation of the 3'-hydroxyl group of dephosphocoenzyme A to form coenzyme A (CoA). The sequence is that of GTP-dependent dephospho-CoA kinase from Nitrosopumilus maritimus (strain SCM1).